Here is a 673-residue protein sequence, read N- to C-terminus: L-type lectin-domain containing receptor kinase SIT2 (673 aa).

The signal sequence occupies residues 1 to 27; the sequence is MVLPKPEMPFFVLLLFLGLGCLRPAAA. The Extracellular portion of the chain corresponds to 28–296; that stretch reads TDERFVFNGF…FPKPRSKTLE (269 aa). Residues 32–270 form a legume-lectin like region; that stretch reads FVFNGFTGAN…VLGWSFKMNG (239 aa). Asparagine 41, asparagine 60, asparagine 82, asparagine 118, asparagine 138, asparagine 191, asparagine 214, asparagine 235, and asparagine 276 each carry an N-linked (GlcNAc...) asparagine glycan. The chain crosses the membrane as a helical span at residues 297–317; it reads IVLPIASAVLVFAVAAAVFVF. Residues 318–673 are Cytoplasmic-facing; that stretch reads MRRRRMFSEL…GTFSDLSGGR (356 aa). Residues 352 to 631 enclose the Protein kinase domain; the sequence is FSDKRLLGIG…LEGDVPLPEL (280 aa). ATP-binding positions include 358–366 and lysine 381; that span reads LGIGGFGRV. Aspartate 477 acts as the Proton acceptor in catalysis.

The protein in the C-terminal section; belongs to the protein kinase superfamily. Ser/Thr protein kinase family. It in the N-terminal section; belongs to the leguminous lectin family. As to expression, mainly expressed in root epidermal cells.

The protein localises to the cell membrane. It carries out the reaction L-seryl-[protein] + ATP = O-phospho-L-seryl-[protein] + ADP + H(+). The enzyme catalyses L-threonyl-[protein] + ATP = O-phospho-L-threonyl-[protein] + ADP + H(+). Its function is as follows. Lectin-domain containing receptor kinase involved in salt stress response. Acts as a negative regulator of salt tolerance. The protein is L-type lectin-domain containing receptor kinase SIT2 of Oryza sativa subsp. japonica (Rice).